The primary structure comprises 222 residues: UPF0688 protein C1orf174 homolog (222 aa).

2 disordered regions span residues 23 to 57 and 98 to 158; these read STSL…RTSK and EDGA…EPVP. Over residues 33–48 the composition is skewed to polar residues; sequence ASSTSAKTTCLASSSH. The segment covering 121 to 131 has biased composition (basic and acidic residues); that stretch reads VSEEPSVKAEE. Position 172 is a phosphoserine (Ser-172).

The protein belongs to the UPF0688 family.

It is found in the nucleus. In Rattus norvegicus (Rat), this protein is UPF0688 protein C1orf174 homolog.